A 361-amino-acid polypeptide reads, in one-letter code: Protein-glutamate methylesterase/protein-glutamine glutaminase 1 (361 aa).

A Response regulatory domain is found at 10–127; it reads KVLVVDDSAL…REGIEEKAQE (118 aa). At aspartate 61 the chain carries 4-aspartylphosphate. The CheB-type methylesterase domain occupies 167 to 359; the sequence is FATTDKLIAV…ASVKRWYAEN (193 aa). Residues serine 179, histidine 205, and aspartate 301 contribute to the active site.

The protein belongs to the CheB family. Post-translationally, phosphorylated by CheA. Phosphorylation of the N-terminal regulatory domain activates the methylesterase activity.

The protein localises to the cytoplasm. It catalyses the reaction [protein]-L-glutamate 5-O-methyl ester + H2O = L-glutamyl-[protein] + methanol + H(+). The enzyme catalyses L-glutaminyl-[protein] + H2O = L-glutamyl-[protein] + NH4(+). Functionally, involved in chemotaxis. Part of a chemotaxis signal transduction system that modulates chemotaxis in response to various stimuli. Catalyzes the demethylation of specific methylglutamate residues introduced into the chemoreceptors (methyl-accepting chemotaxis proteins or MCP) by CheR. Also mediates the irreversible deamidation of specific glutamine residues to glutamic acid. In Hahella chejuensis (strain KCTC 2396), this protein is Protein-glutamate methylesterase/protein-glutamine glutaminase 1.